Consider the following 431-residue polypeptide: UDP-N-acetylglucosamine 1-carboxyvinyltransferase (431 aa).

24–25 lines the phosphoenolpyruvate pocket; the sequence is KN. Arg-95 provides a ligand contact to UDP-N-acetyl-alpha-D-glucosamine. Catalysis depends on Asp-119, which acts as the Proton donor. Residues Asp-314 and Met-336 each contribute to the UDP-N-acetyl-alpha-D-glucosamine site.

The protein belongs to the EPSP synthase family. MurA subfamily.

It localises to the cytoplasm. The catalysed reaction is phosphoenolpyruvate + UDP-N-acetyl-alpha-D-glucosamine = UDP-N-acetyl-3-O-(1-carboxyvinyl)-alpha-D-glucosamine + phosphate. The protein operates within cell wall biogenesis; peptidoglycan biosynthesis. In terms of biological role, cell wall formation. Adds enolpyruvyl to UDP-N-acetylglucosamine. This Bradyrhizobium diazoefficiens (strain JCM 10833 / BCRC 13528 / IAM 13628 / NBRC 14792 / USDA 110) protein is UDP-N-acetylglucosamine 1-carboxyvinyltransferase.